The chain runs to 44 residues: uncharacterized protein (44 aa).

This is an uncharacterized protein from Haemophilus influenzae (strain ATCC 51907 / DSM 11121 / KW20 / Rd).